Consider the following 251-residue polypeptide: SNAP25 homologous protein SNAP29 (251 aa).

The disordered stretch occupies residues M1–Q52. Residues T40 to Q52 show a composition bias toward polar residues. Positions K186 to L248 constitute a t-SNARE coiled-coil homology domain.

Belongs to the SNAP-25 family.

The protein resides in the membrane. The protein localises to the cytoplasm. SNAREs, soluble N-ethylmaleimide-sensitive factor-attachment protein receptors, are essential proteins for fusion of cellular membranes. SNAREs localized on opposing membranes assemble to form a trans-SNARE complex, an extended, parallel four alpha-helical bundle that drives membrane fusion. The polypeptide is SNAP25 homologous protein SNAP29 (SNAP29) (Arabidopsis thaliana (Mouse-ear cress)).